Here is a 426-residue protein sequence, read N- to C-terminus: Egl nine homolog 1 (426 aa).

Ala2 bears the N-acetylalanine mark. The segment at 6–20 is required for nuclear export; that stretch reads GGPGGPSPSERDRQY. Ser12 carries the phosphoserine modification. 8 residues coordinate Zn(2+): Cys21, Cys24, Cys33, Cys36, Cys42, His46, His54, and Cys58. An MYND-type; atypical zinc finger spans residues 21-58; the sequence is CELCGKMENLLRCSRCRSSFYCCKEHQRQDWKKHKLVC. 2 disordered regions span residues 65–129 and 160–184; these read LGHG…PCRA and ANLY…PNGQ. The segment covering 77 to 87 has biased composition (pro residues); that stretch reads PAPPAAVPPPR. The segment covering 89 to 103 has biased composition (basic and acidic residues); that stretch reads GAREPRKAAARRDNA. The span at 120–129 shows a compositional bias: low complexity; it reads PAAAASPCRA. Ser125 bears the Phosphoserine mark. S-nitrosocysteine is present on residues Cys201 and Cys208. Positions 241 to 251 are beta(2)beta(3) 'finger-like' loop; sequence VSQKSDSSKDI. One can recognise a Fe2OG dioxygenase domain in the interval 291–392; the sequence is KINGRTKAMV…RYAITVWYFD (102 aa). At Cys302 the chain carries S-nitrosocysteine. Residues His313 and Asp315 each contribute to the Fe cation site. Cys323 and Cys326 each carry S-nitrosocysteine. A Fe cation-binding site is contributed by His374. Arg383 is a binding site for 2-oxoglutarate.

Monomer. Interacts with ING4; the interaction inhibits the hydroxylation of HIF alpha proteins. Interacts with PTGES3 (via PXLE motif); thereby recruiting EGLN1 to the HSP90 pathway to facilitate HIF alpha proteins hydroxylation. Interacts with LIMD1. Found in a complex composed of LIMD1, VHL, EGLN1/PHD2, ELOB and CUL2. Interacts with EPAS1. Interacts with CBFA2T3. Interacts with HIF1A. Requires Fe(2+) as cofactor. L-ascorbate is required as a cofactor. Post-translationally, S-nitrosylation inhibits the enzyme activity up to 60% under aerobic conditions. Chelation of Fe(2+) has no effect on the S-nitrosylation. It is uncertain whether nitrosylation occurs on Cys-323 or Cys-326. In terms of tissue distribution, according to PubMed:11056053, widely expressed with highest levels in skeletal muscle and heart, moderate levels in pancreas, brain (dopaminergic neurons of adult and fetal substantia nigra) and kidney, and lower levels in lung and liver. According to PubMed:12351678 widely expressed with highest levels in brain, kidney and adrenal gland. Expressed in cardiac myocytes, aortic endothelial cells and coronary artery smooth muscle. According to PubMed:12788921; expressed in adult and fetal heart, brain, liver, lung, skeletal muscle and kidney. Also expressed in placenta. Highest levels in adult heart, brain, lung and liver and fetal brain, heart spleen and skeletal muscle.

The protein localises to the cytoplasm. It is found in the nucleus. It catalyses the reaction L-prolyl-[hypoxia-inducible factor alpha subunit] + 2-oxoglutarate + O2 = trans-4-hydroxy-L-prolyl-[hypoxia-inducible factor alpha subunit] + succinate + CO2. Following exposure to hypoxia, activated in HeLa cells but not in cardiovascular cells. Its function is as follows. Cellular oxygen sensor that catalyzes, under normoxic conditions, the post-translational formation of 4-hydroxyproline in hypoxia-inducible factor (HIF) alpha proteins. Hydroxylates a specific proline found in each of the oxygen-dependent degradation (ODD) domains (N-terminal, NODD, and C-terminal, CODD) of HIF1A. Also hydroxylates HIF2A. Has a preference for the CODD site for both HIF1A and HIF1B. Hydroxylated HIFs are then targeted for proteasomal degradation via the von Hippel-Lindau ubiquitination complex. Under hypoxic conditions, the hydroxylation reaction is attenuated allowing HIFs to escape degradation resulting in their translocation to the nucleus, heterodimerization with HIF1B, and increased expression of hypoxy-inducible genes. EGLN1 is the most important isozyme under normoxia and, through regulating the stability of HIF1, involved in various hypoxia-influenced processes such as angiogenesis in retinal and cardiac functionality. Target proteins are preferentially recognized via a LXXLAP motif. This is Egl nine homolog 1 from Homo sapiens (Human).